The sequence spans 147 residues: Putative protein CLUHP3 (147 aa).

The disordered stretch occupies residues 14–47; it reads KEPEGGRRRLSHPGNMGWMRPSQETTPPDRSHHS.

This chain is Putative protein CLUHP3 (CLUHP3), found in Homo sapiens (Human).